A 744-amino-acid chain; its full sequence is CCR4-NOT transcription complex subunit 10 (744 aa).

Residues 1-16 (MAADKAADQGAEKHDG) are compositionally biased toward basic and acidic residues. Residues 1 to 25 (MAADKAADQGAEKHDGAGTSGITDQ) form a disordered region. Positions 72–106 (CKSNQTTTDNLRQTLNQLKNQVHSAVEEMDGLDDV) form a coiled coil. Residues 182 to 198 (NNNSKNGKNESGNNTNK) show a composition bias toward low complexity. Disordered stretches follow at residues 182-204 (NNNS…SNQK), 476-520 (QQEP…APPS), and 602-634 (VSLG…PQCY). Polar residues-rich tracts occupy residues 484-506 (GSKP…ACSN) and 602-612 (VSLGISSNEQD).

This sequence belongs to the CNOT10 family. In terms of assembly, component of the CCR4-NOT complex. CNOT10 and CNOT11 form a subcomplex docked to the CNOT1 scaffold.

It localises to the cytoplasm. The protein localises to the nucleus. Component of the CCR4-NOT complex which is one of the major cellular mRNA deadenylases and is linked to various cellular processes including bulk mRNA degradation, miRNA-mediated repression, translational repression during translational initiation and general transcription regulation. Additional complex functions may be a consequence of its influence on mRNA expression. Is not required for association of CNOT7 to the CCR4-NOT complex. This Gallus gallus (Chicken) protein is CCR4-NOT transcription complex subunit 10 (CNOT10).